The following is a 200-amino-acid chain: High mobility group protein B3 (200 aa).

Lys3 carries the post-translational modification N6-acetyllysine. 2 DNA-binding regions (HMG box) span residues 9–79 (PKGK…KDYG) and 93–161 (PKRP…ADYK). The residue at position 23 (Cys23) is a Cysteine sulfonic acid (-SO3H); alternate. Residues Cys23 and Cys45 are joined by a disulfide bond. Lys30 and Lys43 each carry N6-acetyllysine. Cysteine sulfonic acid (-SO3H); alternate is present on Cys45. Residues 71–97 (YDREMKDYGPAKGGKKKKDPNAPKRPP) are disordered. A Phosphoserine modification is found at Ser98. At Cys104 the chain carries Cysteine sulfonic acid (-SO3H). Residues Lys112 and Lys139 each carry the N6-acetyllysine modification. The interval 161–200 (KSKGKFDGAKGPAKVARKKVEEEEEEEEEEEEEEEEEEDE) is disordered. Positions 182-200 (EEEEEEEEEEEEEEEEEDE) are enriched in acidic residues.

It belongs to the HMGB family. Post-translationally, reduction/oxidation of cysteine residues Cys-23, Cys-45 and Cys-104 and a possible intramolecular disulfide bond involving Cys-23 and Cys-45 give rise to different redox forms with specific functional activities in various cellular compartments: 1- fully reduced HMGB3 (HMGB3C23hC45hC104h), 2- disulfide HMGB3 (HMGB3C23-C45C104h) and 3- sulfonyl HMGB3 (HMGB3C23soC45soC104so). In terms of tissue distribution, expressed in bone marrow cells, specifically in primitive Lin-, c-kit+, Sca-1+, IL-7Ralpha- cells, and Ter119+ erythroid cells.

It localises to the nucleus. The protein resides in the chromosome. It is found in the cytoplasm. Functionally, multifunctional protein with various roles in different cellular compartments. May act in a redox sensitive manner. Associates with chromatin and binds DNA with a preference for non-canonical DNA structures such as single-stranded DNA. Can bend DNA and enhance DNA flexibility by looping thus providing a mechanism to promote activities on various gene promoters. Proposed to be involved in the innate immune response to nucleic acids by acting as a cytoplasmic promiscuous immunogenic DNA/RNA sensor. Negatively regulates B-cell and myeloid cell differentiation. In hematopoietic stem cells may regulate the balance between self-renewal and differentiation. Involved in negative regulation of canonical Wnt signaling. The sequence is that of High mobility group protein B3 (Hmgb3) from Mus musculus (Mouse).